Reading from the N-terminus, the 276-residue chain is Large ribosomal subunit protein uL2 (276 aa).

Residues threonine 219 to lysine 276 form a disordered region.

This sequence belongs to the universal ribosomal protein uL2 family. Part of the 50S ribosomal subunit. Forms a bridge to the 30S subunit in the 70S ribosome.

In terms of biological role, one of the primary rRNA binding proteins. Required for association of the 30S and 50S subunits to form the 70S ribosome, for tRNA binding and peptide bond formation. It has been suggested to have peptidyltransferase activity; this is somewhat controversial. Makes several contacts with the 16S rRNA in the 70S ribosome. This Oceanobacillus iheyensis (strain DSM 14371 / CIP 107618 / JCM 11309 / KCTC 3954 / HTE831) protein is Large ribosomal subunit protein uL2.